Consider the following 500-residue polypeptide: Citrate lyase alpha chain (500 aa).

Oligomer with a subunit composition of (alpha,beta,gamma)6.

The protein resides in the cytoplasm. It carries out the reaction citrate = oxaloacetate + acetate. The catalysed reaction is citrate + acetyl-CoA = (3S)-citryl-CoA + acetate. Its function is as follows. Represents a citrate:acetyl-ACP transferase. The protein is Citrate lyase alpha chain (citF) of Haemophilus influenzae (strain ATCC 51907 / DSM 11121 / KW20 / Rd).